Reading from the N-terminus, the 523-residue chain is Bifunctional purine biosynthesis protein PurH (523 aa).

One can recognise an MGS-like domain in the interval 4–152; the sequence is DHIRRPIRRA…KNHPSVAVVT (149 aa).

It belongs to the PurH family.

It carries out the reaction (6R)-10-formyltetrahydrofolate + 5-amino-1-(5-phospho-beta-D-ribosyl)imidazole-4-carboxamide = 5-formamido-1-(5-phospho-D-ribosyl)imidazole-4-carboxamide + (6S)-5,6,7,8-tetrahydrofolate. It catalyses the reaction IMP + H2O = 5-formamido-1-(5-phospho-D-ribosyl)imidazole-4-carboxamide. It participates in purine metabolism; IMP biosynthesis via de novo pathway; 5-formamido-1-(5-phospho-D-ribosyl)imidazole-4-carboxamide from 5-amino-1-(5-phospho-D-ribosyl)imidazole-4-carboxamide (10-formyl THF route): step 1/1. The protein operates within purine metabolism; IMP biosynthesis via de novo pathway; IMP from 5-formamido-1-(5-phospho-D-ribosyl)imidazole-4-carboxamide: step 1/1. This Mycobacterium marinum (strain ATCC BAA-535 / M) protein is Bifunctional purine biosynthesis protein PurH.